Reading from the N-terminus, the 353-residue chain is UPF0283 membrane protein YcjF (353 aa).

The span at 1-19 shows a compositional bias: basic and acidic residues; that stretch reads MSEPLKPRIDFAEPLKEEP. The segment at 1–35 is disordered; it reads MSEPLKPRIDFAEPLKEEPTSAFKAQQTFSEAESR. A run of 3 helical transmembrane segments spans residues 70-90, 100-120, and 213-233; these read MVMG…VQWT, VALG…GSVV, and ESTL…FIAW.

It belongs to the UPF0283 family.

The protein localises to the cell inner membrane. The protein is UPF0283 membrane protein YcjF of Salmonella newport (strain SL254).